Reading from the N-terminus, the 300-residue chain is Urease accessory protein UreD (300 aa).

The protein belongs to the UreD family. In terms of assembly, ureD, UreF and UreG form a complex that acts as a GTP-hydrolysis-dependent molecular chaperone, activating the urease apoprotein by helping to assemble the nickel containing metallocenter of UreC. The UreE protein probably delivers the nickel.

Its subcellular location is the cytoplasm. Functionally, required for maturation of urease via the functional incorporation of the urease nickel metallocenter. The sequence is that of Urease accessory protein UreD from Prochlorococcus marinus (strain MIT 9215).